A 184-amino-acid chain; its full sequence is Glutathione-regulated potassium-efflux system ancillary protein KefG (184 aa).

The protein belongs to the NAD(P)H dehydrogenase (quinone) family. KefG subfamily. In terms of assembly, interacts with KefB.

The protein resides in the cell inner membrane. The enzyme catalyses a quinone + NADH + H(+) = a quinol + NAD(+). It carries out the reaction a quinone + NADPH + H(+) = a quinol + NADP(+). Regulatory subunit of a potassium efflux system that confers protection against electrophiles. Required for full activity of KefB. The protein is Glutathione-regulated potassium-efflux system ancillary protein KefG of Yersinia enterocolitica serotype O:8 / biotype 1B (strain NCTC 13174 / 8081).